The following is a 137-amino-acid chain: Large ribosomal subunit protein uL16 (137 aa).

It belongs to the universal ribosomal protein uL16 family. Part of the 50S ribosomal subunit.

Its function is as follows. Binds 23S rRNA and is also seen to make contacts with the A and possibly P site tRNAs. The protein is Large ribosomal subunit protein uL16 of Stenotrophomonas maltophilia (strain R551-3).